The primary structure comprises 332 residues: uncharacterized protein (332 aa).

Residues 159–256 form a disordered region; it reads PLEISGRGGN…PRPHPWGPGP (98 aa). Residues 201–231 are compositionally biased toward pro residues; sequence RPPSPRPPSPRPPHPRPPSPRPPHPRPPSPR.

It localises to the virion. This is an uncharacterized protein from Acanthamoeba polyphaga (Amoeba).